Consider the following 769-residue polypeptide: Integrin beta-2 (769 aa).

The signal sequence occupies residues 1-22 (MLRQRPQLLLLAGLLALQSVLS). Q23 bears the Pyrrolidone carboxylic acid mark. The Extracellular portion of the chain corresponds to 23-700 (QECTNYKVST…DMLECVKGPN (678 aa)). A PSI domain is found at 24-74 (ECTNYKVSTCRDCIESGPGCAWCQKLNFTGQGEPDSIRCDTRAELLSKGCP). Intrachain disulfides connect C25–C43, C33–C447, C36–C62, C46–C73, C191–C198, C246–C286, C386–C400, C420–C445, C449–C467, C459–C470, C472–C481, C483–C514, C497–C512, C506–C517, C519–C534, C536–C559, C541–C557, C549–C562, C564–C573, C575–C598, C582–C596, C590–C601, C603–C612, C615–C618, C622–C662, C628–C647, C631–C643, and C670–C695. N50 and N116 each carry an N-linked (GlcNAc...) asparagine glycan. The VWFA domain maps to 124 to 363 (GYPIDLYYLM…ELIKNAYNKL (240 aa)). Mg(2+)-binding residues include S136 and S138. Ca(2+) contacts are provided by S138, D141, D142, and D173. Ca(2+) is bound by residues N229, D231, P233, and E234. A Mg(2+)-binding site is contributed by E234. N254 carries an N-linked (GlcNAc...) asparagine glycan. Ca(2+) is bound by residues D264 and E347. Residues 397 to 399 (RGD) carry the Cell attachment site motif. I-EGF domains lie at 449–482 (CRDA…KNCE), 483–535 (CQTQ…QFCE), 536–574 (CDNV…SACQ), and 575–613 (CLKS…PLCS). An N-linked (GlcNAc...) asparagine glycan is attached at N501. The N-linked (GlcNAc...) asparagine glycan is linked to N642. A helical transmembrane segment spans residues 701 to 723 (IAAIVGGTVGGVVLVGILLLVIW). Residues 724 to 769 (KALTHLSDLREYHRFEKEKLKSQWNNDNPLFKSATTTVMNPKFAES) lie on the Cytoplasmic side of the membrane. 2 positions are modified to phosphoserine: S745 and S756. A phosphothreonine mark is found at T758 and T760.

The protein belongs to the integrin beta chain family. In terms of assembly, heterodimer of an alpha and a beta subunit. The ITGB2 beta subunit associates with the ITGAL, ITGAM, ITGAX or ITGAD alpha subunits. Found in a complex with CD177 and ITGAM/CD11b. Interacts with FGR. Interacts with COPS5 and RANBP9. Interacts with FLNA (via filamin repeats 4, 9, 12, 17, 19, 21, and 23). Interacts with THBD. In terms of processing, both Ser-745 and Ser-756 become phosphorylated when T-cells are exposed to phorbol esters. Phosphorylation on Thr-758 (but not on Ser-756) allows interaction with 14-3-3 proteins.

It localises to the cell membrane. The protein localises to the membrane raft. Integrin ITGAL/ITGB2 is a receptor for ICAM1, ICAM2, ICAM3 and ICAM4. Integrin ITGAL/ITGB2 is also a receptor for the secreted form of ubiquitin-like protein ISG15; the interaction is mediated by ITGAL. Integrins ITGAM/ITGB2 and ITGAX/ITGB2 are receptors for the iC3b fragment of the third complement component and for fibrinogen. Integrin ITGAX/ITGB2 recognizes the sequence G-P-R in fibrinogen alpha-chain. Integrin ITGAM/ITGB2 recognizes P1 and P2 peptides of fibrinogen gamma chain. Integrin ITGAM/ITGB2 is also a receptor for factor X. Integrin ITGAD/ITGB2 is a receptor for ICAM3 and VCAM1. Contributes to natural killer cell cytotoxicity. Involved in leukocyte adhesion and transmigration of leukocytes including T-cells and neutrophils. Triggers neutrophil transmigration during lung injury through PTK2B/PYK2-mediated activation. Integrin ITGAL/ITGB2 in association with ICAM3, contributes to apoptotic neutrophil phagocytosis by macrophages. The polypeptide is Integrin beta-2 (ITGB2) (Bos taurus (Bovine)).